Here is a 430-residue protein sequence, read N- to C-terminus: Glutamate-1-semialdehyde 2,1-aminomutase (430 aa).

Position 267 is an N6-(pyridoxal phosphate)lysine (Lys267).

This sequence belongs to the class-III pyridoxal-phosphate-dependent aminotransferase family. HemL subfamily. In terms of assembly, homodimer. Pyridoxal 5'-phosphate serves as cofactor.

Its subcellular location is the cytoplasm. The enzyme catalyses (S)-4-amino-5-oxopentanoate = 5-aminolevulinate. It functions in the pathway porphyrin-containing compound metabolism; protoporphyrin-IX biosynthesis; 5-aminolevulinate from L-glutamyl-tRNA(Glu): step 2/2. The sequence is that of Glutamate-1-semialdehyde 2,1-aminomutase from Anaeromyxobacter dehalogenans (strain 2CP-C).